The following is a 118-amino-acid chain: HTH-type transcriptional regulator SarT (118 aa).

The H-T-H motif DNA-binding region spans 55 to 78 (MRDIISYIGIDQSRIVKSVKELSK).

Belongs to the SarA family.

Its subcellular location is the cytoplasm. In terms of biological role, transcriptional regulator acting as an intermediary between major regulators SarA and agr and virulence genes. Represses alpha-hemolysin (hla) gene expression. This is HTH-type transcriptional regulator SarT (sarT) from Staphylococcus aureus (strain Mu50 / ATCC 700699).